Reading from the N-terminus, the 360-residue chain is Mitogen-activated protein kinase 14 (360 aa).

At Ser-2 the chain carries N-acetylserine. The residue at position 2 (Ser-2) is a Phosphoserine. At Thr-16 the chain carries Phosphothreonine. The Protein kinase domain maps to 24–308 (YQNLSPVGSG…AAQALAHAYF (285 aa)). Residues 30 to 38 (VGSGAYGSV) and Lys-53 each bind ATP. Lys-53 carries the post-translational modification N6-acetyllysine. The active-site Proton acceptor is Asp-150. N6-acetyllysine is present on Lys-152. Phosphothreonine is present on Thr-180. The TXY signature appears at 180–182 (TGY). At Tyr-182 the chain carries Phosphotyrosine. Tyr-323 carries the post-translational modification Phosphotyrosine; by ZAP70.

This sequence belongs to the protein kinase superfamily. CMGC Ser/Thr protein kinase family. MAP kinase subfamily. Component of a signaling complex containing at least AKAP13, PKN1, MAPK14, ZAK and MAP2K3. Within this complex, AKAP13 interacts directly with PKN1, which in turn recruits MAPK14, MAP2K3 and ZAK. Binds to a kinase interaction motif within the protein tyrosine phosphatase, PTPRR. This interaction retains MAPK14 in the cytoplasm and prevents nuclear accumulation. Interacts with SPAG9 and GADD45A. Interacts with CDC25B, CDC25C, DUSP1, DUSP10, DUSP16, NP60, SUPT20H and TAB1. Interacts with casein kinase II subunits CSNK2A1 and CSNK2B. Interacts with PPM1D. Interacts with CDK5RAP3; recruits PPM1D to MAPK14 and may regulate its dephosphorylation. Interacts with DUSP2; this interaction does not lead to catalytic activation of DUSP2 and dephosphrylation of MAPK14. Mg(2+) serves as cofactor. In terms of processing, dually phosphorylated on Thr-180 and Tyr-182 by the MAP2Ks MAP2K3/MKK3, MAP2K4/MKK4 and MAP2K6/MKK6 in response to inflammatory cytokines, environmental stress or growth factors, which activates the enzyme. Dual phosphorylation can also be mediated by TAB1-mediated autophosphorylation. TCR engagement in T-cells also leads to Tyr-323 phosphorylation by ZAP70. Dephosphorylated and inactivated by DUPS1, DUSP10 and DUSP16. PPM1D also mediates dephosphorylation and inactivation of MAPK14. Acetylated at Lys-53 and Lys-152 by KAT2B and EP300. Acetylation at Lys-53 increases the affinity for ATP and enhances kinase activity. Lys-53 and Lys-152 are deacetylated by HDAC3. Post-translationally, ubiquitinated. Ubiquitination leads to degradation by the proteasome pathway.

The protein resides in the cytoplasm. Its subcellular location is the nucleus. It catalyses the reaction L-seryl-[protein] + ATP = O-phospho-L-seryl-[protein] + ADP + H(+). It carries out the reaction L-threonyl-[protein] + ATP = O-phospho-L-threonyl-[protein] + ADP + H(+). Its activity is regulated as follows. Activated by cell stresses such as DNA damage, heat shock, osmotic shock, anisomycin and sodium arsenite, as well as pro-inflammatory stimuli such as bacterial lipopolysaccharide (LPS) and interleukin-1. Activation occurs through dual phosphorylation of Thr-180 and Tyr-182 by either of two dual specificity kinases, MAP2K3/MKK3 or MAP2K6/MKK6, and potentially also MAP2K4/MKK4, as well as by TAB1-mediated autophosphorylation. MAPK14 phosphorylated on both Thr-180 and Tyr-182 is 10-20-fold more active than MAPK14 phosphorylated only on Thr-180, whereas MAPK14 phosphorylated on Tyr-182 alone is inactive. whereas Thr-180 is necessary for catalysis, Tyr-182 may be required for auto-activation and substrate recognition. Phosphorylated at Tyr-323 by ZAP70 in an alternative activation pathway in response to TCR signaling in T-cells. This alternative pathway is inhibited by GADD45A. Inhibited by dual specificity phosphatases, such as DUSP1, DUSP10, and DUSP16. Specifically inhibited by the binding of pyridinyl-imidazole compounds, which are cytokine-suppressive anti-inflammatory drugs (CSAID). SB203580 is an inhibitor of MAPK14. Its function is as follows. Serine/threonine kinase which acts as an essential component of the MAP kinase signal transduction pathway. MAPK14 is one of the four p38 MAPKs which play an important role in the cascades of cellular responses evoked by extracellular stimuli such as pro-inflammatory cytokines or physical stress leading to direct activation of transcription factors. Accordingly, p38 MAPKs phosphorylate a broad range of proteins and it has been estimated that they may have approximately 200 to 300 substrates each. Some of the targets are downstream kinases which are activated through phosphorylation and further phosphorylate additional targets. RPS6KA5/MSK1 and RPS6KA4/MSK2 can directly phosphorylate and activate transcription factors such as CREB1, ATF1, the NF-kappa-B isoform RELA/NFKB3, STAT1 and STAT3, but can also phosphorylate histone H3 and the nucleosomal protein HMGN1. RPS6KA5/MSK1 and RPS6KA4/MSK2 play important roles in the rapid induction of immediate-early genes in response to stress or mitogenic stimuli, either by inducing chromatin remodeling or by recruiting the transcription machinery. On the other hand, two other kinase targets, MAPKAPK2/MK2 and MAPKAPK3/MK3, participate in the control of gene expression mostly at the post-transcriptional level, by phosphorylating ZFP36 (tristetraprolin) and ELAVL1, and by regulating EEF2K, which is important for the elongation of mRNA during translation. MKNK1/MNK1 and MKNK2/MNK2, two other kinases activated by p38 MAPKs, regulate protein synthesis by phosphorylating the initiation factor EIF4E2. MAPK14 also interacts with casein kinase II, leading to its activation through autophosphorylation and further phosphorylation of TP53/p53. In the cytoplasm, the p38 MAPK pathway is an important regulator of protein turnover. For example, CFLAR is an inhibitor of TNF-induced apoptosis whose proteasome-mediated degradation is regulated by p38 MAPK phosphorylation. In a similar way, MAPK14 phosphorylates the ubiquitin ligase SIAH2, regulating its activity towards EGLN3. MAPK14 may also inhibit the lysosomal degradation pathway of autophagy by interfering with the intracellular trafficking of the transmembrane protein ATG9. Another function of MAPK14 is to regulate the endocytosis of membrane receptors by different mechanisms that impinge on the small GTPase RAB5A. In addition, clathrin-mediated EGFR internalization induced by inflammatory cytokines and UV irradiation depends on MAPK14-mediated phosphorylation of EGFR itself as well as of RAB5A effectors. Ectodomain shedding of transmembrane proteins is regulated by p38 MAPKs as well. In response to inflammatory stimuli, p38 MAPKs phosphorylate the membrane-associated metalloprotease ADAM17. Such phosphorylation is required for ADAM17-mediated ectodomain shedding of TGF-alpha family ligands, which results in the activation of EGFR signaling and cell proliferation. Another p38 MAPK substrate is FGFR1. FGFR1 can be translocated from the extracellular space into the cytosol and nucleus of target cells, and regulates processes such as rRNA synthesis and cell growth. FGFR1 translocation requires p38 MAPK activation. In the nucleus, many transcription factors are phosphorylated and activated by p38 MAPKs in response to different stimuli. Classical examples include ATF1, ATF2, ATF6, ELK1, PTPRH, DDIT3, TP53/p53 and MEF2C and MEF2A. The p38 MAPKs are emerging as important modulators of gene expression by regulating chromatin modifiers and remodelers. The promoters of several genes involved in the inflammatory response, such as IL6, IL8 and IL12B, display a p38 MAPK-dependent enrichment of histone H3 phosphorylation on 'Ser-10' (H3S10ph) in LPS-stimulated myeloid cells. This phosphorylation enhances the accessibility of the cryptic NF-kappa-B-binding sites marking promoters for increased NF-kappa-B recruitment. Phosphorylates CDC25B and CDC25C which is required for binding to 14-3-3 proteins and leads to initiation of a G2 delay after ultraviolet radiation. Phosphorylates TIAR following DNA damage, releasing TIAR from GADD45A mRNA and preventing mRNA degradation. The p38 MAPKs may also have kinase-independent roles, which are thought to be due to the binding to targets in the absence of phosphorylation. Protein O-Glc-N-acylation catalyzed by the OGT is regulated by MAPK14, and, although OGT does not seem to be phosphorylated by MAPK14, their interaction increases upon MAPK14 activation induced by glucose deprivation. This interaction may regulate OGT activity by recruiting it to specific targets such as neurofilament H, stimulating its O-Glc-N-acylation. Required in mid-fetal development for the growth of embryo-derived blood vessels in the labyrinth layer of the placenta. Also plays an essential role in developmental and stress-induced erythropoiesis, through regulation of EPO gene expression. Phosphorylates S100A9 at 'Thr-113'. The protein is Mitogen-activated protein kinase 14 of Rattus norvegicus (Rat).